The sequence spans 560 residues: Dihydroxy-acid dehydratase (560 aa).

Aspartate 78 lines the Mg(2+) pocket. Cysteine 119 serves as a coordination point for [2Fe-2S] cluster. 2 residues coordinate Mg(2+): aspartate 120 and lysine 121. Lysine 121 is modified (N6-carboxylysine). [2Fe-2S] cluster is bound at residue cysteine 192. Glutamate 446 contributes to the Mg(2+) binding site. Serine 472 acts as the Proton acceptor in catalysis.

Belongs to the IlvD/Edd family. Homodimer. [2Fe-2S] cluster is required as a cofactor. Mg(2+) serves as cofactor.

It catalyses the reaction (2R)-2,3-dihydroxy-3-methylbutanoate = 3-methyl-2-oxobutanoate + H2O. The enzyme catalyses (2R,3R)-2,3-dihydroxy-3-methylpentanoate = (S)-3-methyl-2-oxopentanoate + H2O. Its pathway is amino-acid biosynthesis; L-isoleucine biosynthesis; L-isoleucine from 2-oxobutanoate: step 3/4. It functions in the pathway amino-acid biosynthesis; L-valine biosynthesis; L-valine from pyruvate: step 3/4. Functions in the biosynthesis of branched-chain amino acids. Catalyzes the dehydration of (2R,3R)-2,3-dihydroxy-3-methylpentanoate (2,3-dihydroxy-3-methylvalerate) into 2-oxo-3-methylpentanoate (2-oxo-3-methylvalerate) and of (2R)-2,3-dihydroxy-3-methylbutanoate (2,3-dihydroxyisovalerate) into 2-oxo-3-methylbutanoate (2-oxoisovalerate), the penultimate precursor to L-isoleucine and L-valine, respectively. This Anaeromyxobacter dehalogenans (strain 2CP-C) protein is Dihydroxy-acid dehydratase.